A 156-amino-acid polypeptide reads, in one-letter code: Oleosin Zm-I (156 aa).

The disordered stretch occupies residues 1 to 30; that stretch reads MADHHRGATGGGGGYGDLQRGGGMHGEAQQ. The residue at position 2 (Ala2) is an N-acetylalanine. The segment at 2-42 is polar; sequence ADHHRGATGGGGGYGDLQRGGGMHGEAQQQQKQGAMMTALK. Over residues 8 to 25 the composition is skewed to gly residues; that stretch reads ATGGGGGYGDLQRGGGMH. Residues 43 to 114 form a hydrophobic region; that stretch reads AATAATFGGS…AALSVFSWMY (72 aa). Transmembrane regions (helical) follow at residues 51-71 and 95-115; these read GSML…LTVA and GFVT…WMYK.

This sequence belongs to the oleosin family. Post-translationally, the N-terminus is blocked.

The protein localises to the lipid droplet. It is found in the membrane. Its function is as follows. May have a structural role to stabilize the lipid body during desiccation of the seed by preventing coalescence of the oil. Probably interacts with both lipid and phospholipid moieties of lipid bodies. May also provide recognition signals for specific lipase anchorage in lipolysis during seedling growth. This is Oleosin Zm-I (OLE16) from Zea mays (Maize).